The chain runs to 185 residues: MARLLFRLLQEANSTSPAEASPPFNSDLVLILAVLLCALTCIIGLIAVSRCAWLRRIASRNRSDQTHPPPVAAANKGLKKKVLRSLPKLTYSPDSPPAEKLVECAICLTEFAAGDELRVLPQCGHGFHVSCIDTWLGSHSSCPSCRQILVVTRCHKCGGLPGSSSSGPEPDTRIKQREDGPDNLP.

Residues 28-48 (LVLILAVLLCALTCIIGLIAV) form a helical membrane-spanning segment. An RING-type; atypical zinc finger spans residues 104-146 (CAICLTEFAAGDELRVLPQCGHGFHVSCIDTWLGSHSSCPSCR). The segment at 161-185 (PGSSSSGPEPDTRIKQREDGPDNLP) is disordered. The segment covering 170–185 (PDTRIKQREDGPDNLP) has biased composition (basic and acidic residues).

Belongs to the RING-type zinc finger family. ATL subfamily.

The protein localises to the membrane. It catalyses the reaction S-ubiquitinyl-[E2 ubiquitin-conjugating enzyme]-L-cysteine + [acceptor protein]-L-lysine = [E2 ubiquitin-conjugating enzyme]-L-cysteine + N(6)-ubiquitinyl-[acceptor protein]-L-lysine.. The protein operates within protein modification; protein ubiquitination. The protein is RING-H2 finger protein ATL8 (ATL8) of Arabidopsis thaliana (Mouse-ear cress).